The sequence spans 103 residues: Large ribosomal subunit protein bL21 (103 aa).

Belongs to the bacterial ribosomal protein bL21 family. As to quaternary structure, part of the 50S ribosomal subunit. Contacts protein L20.

Functionally, this protein binds to 23S rRNA in the presence of protein L20. This is Large ribosomal subunit protein bL21 from Cupriavidus metallidurans (strain ATCC 43123 / DSM 2839 / NBRC 102507 / CH34) (Ralstonia metallidurans).